Reading from the N-terminus, the 490-residue chain is Betaine aldehyde dehydrogenase (490 aa).

Residues S26, I27, and D93 each coordinate K(+). Residue 150–152 (GAW) coordinates NAD(+). Residue K162 is the Charge relay system of the active site. 176-179 (KPSE) lines the NAD(+) pocket. A K(+)-binding site is contributed by V180. 230–233 (GTVT) contacts NAD(+). Position 246 (L246) interacts with K(+). Catalysis depends on E252, which acts as the Proton acceptor. NAD(+) contacts are provided by G254, C286, and E387. C286 acts as the Nucleophile in catalysis. C286 carries the post-translational modification Cysteine sulfenic acid (-SOH). 2 residues coordinate K(+): K457 and G460. Residue E464 is the Charge relay system of the active site.

The protein belongs to the aldehyde dehydrogenase family. As to quaternary structure, dimer of dimers. K(+) serves as cofactor.

It carries out the reaction betaine aldehyde + NAD(+) + H2O = glycine betaine + NADH + 2 H(+). Its pathway is amine and polyamine biosynthesis; betaine biosynthesis via choline pathway; betaine from betaine aldehyde: step 1/1. Involved in the biosynthesis of the osmoprotectant glycine betaine. Catalyzes the irreversible oxidation of betaine aldehyde to the corresponding acid. The chain is Betaine aldehyde dehydrogenase from Ectopseudomonas mendocina (strain ymp) (Pseudomonas mendocina).